Reading from the N-terminus, the 415-residue chain is Leucine-rich repeat-containing protein 34 (415 aa).

LRR repeat units follow at residues 246-272 and 274-296; these read SLRY…LKSN and TLEV…LSET.

In terms of assembly, interacts with NPM1 and NCL. As to expression, expressed in testis where it specifically localizes to germ cells (at protein level). Not detected in other tissues tested (at protein level). Expressed in pluripotent embryonic stem cells and multipotent adult germline stem cells.

It localises to the nucleus. The protein localises to the nucleolus. The protein resides in the cytoplasm. In terms of biological role, highly expressed in stem cells where it may be involved in regulation of pluripotency. In embryonic stem cells (ESCs), important for normal expression of the pluripotency regulators POU5F1/OCT4 and KLF4. Also important for expression of the ectodermal marker gene NES and the endodermal marker gene GATA4. Promotes stem cell proliferation in vitro. This is Leucine-rich repeat-containing protein 34 from Mus musculus (Mouse).